Here is a 265-residue protein sequence, read N- to C-terminus: Small ribosomal subunit protein uS3 (265 aa).

One can recognise a KH type-2 domain in the interval 39–107 (VRDFLKKKLK…PVHVNIEEIR (69 aa)). The tract at residues 211–265 (NDAPVVEEPQDDRRRRPGRPEGRRREGEGRPGGNRRGGAGAGRRAAPGADAKSGE) is disordered. The span at 221–239 (DDRRRRPGRPEGRRREGEG) shows a compositional bias: basic and acidic residues. A compositionally biased stretch (gly residues) spans 240-251 (RPGGNRRGGAGA).

Belongs to the universal ribosomal protein uS3 family. As to quaternary structure, part of the 30S ribosomal subunit. Forms a tight complex with proteins S10 and S14.

In terms of biological role, binds the lower part of the 30S subunit head. Binds mRNA in the 70S ribosome, positioning it for translation. The polypeptide is Small ribosomal subunit protein uS3 (Cupriavidus necator (strain ATCC 17699 / DSM 428 / KCTC 22496 / NCIMB 10442 / H16 / Stanier 337) (Ralstonia eutropha)).